The chain runs to 209 residues: Immunoglobulin lambda-like polypeptide 1 (209 aa).

A signal peptide spans methionine 1–glycine 30. Positions valine 93 to glycine 104 are j region. Residues glutamine 105–serine 209 form a c region region. Residues proline 110 to serine 204 enclose the Ig-like C1-type domain. A disulfide bridge connects residues cysteine 131 and cysteine 190.

Interacts with VPREB1A. Interacts with SYNV1/HRD1 (via N-terminus); this interaction leads to increased IGLL1 ubiquitination and degradation in pre-B cells, possibly through a lysosomal, not proteasomal, pathway. Selectively expressed in pre-B lymphocytes.

Its subcellular location is the endoplasmic reticulum. It localises to the secreted. Critical for B-cell development. This is Immunoglobulin lambda-like polypeptide 1 (Igll1) from Mus musculus (Mouse).